A 402-amino-acid polypeptide reads, in one-letter code: Adenylyltransferase and sulfurtransferase MOCS3 (402 aa).

Residues Gly-47, Asp-68, 75–79, Lys-92, and 136–137 contribute to the ATP site; these read DNLHR and DN. Residues Cys-178 and Cys-181 each coordinate Zn(2+). Catalysis depends on Cys-195, which acts as the Glycyl thioester intermediate; for adenylyltransferase activity. Zn(2+)-binding residues include Cys-253 and Cys-256. The Rhodanese domain occupies 303 to 400; sequence AARKQFLLDT…WALKINDEFP (98 aa). The active-site Cysteine persulfide intermediate; for sulfurtransferase activity is the Cys-359.

The protein in the N-terminal section; belongs to the HesA/MoeB/ThiF family. UBA4 subfamily. The cofactor is Zn(2+).

It localises to the cytoplasm. It is found in the cytosol. The enzyme catalyses [molybdopterin-synthase sulfur-carrier protein]-C-terminal Gly-Gly + ATP + H(+) = [molybdopterin-synthase sulfur-carrier protein]-C-terminal Gly-Gly-AMP + diphosphate. It carries out the reaction [molybdopterin-synthase sulfur-carrier protein]-C-terminal Gly-Gly-AMP + S-sulfanyl-L-cysteinyl-[cysteine desulfurase] + AH2 = [molybdopterin-synthase sulfur-carrier protein]-C-terminal-Gly-aminoethanethioate + L-cysteinyl-[cysteine desulfurase] + A + AMP + 2 H(+). It functions in the pathway tRNA modification; 5-methoxycarbonylmethyl-2-thiouridine-tRNA biosynthesis. Its pathway is cofactor biosynthesis; molybdopterin biosynthesis. Plays a central role in 2-thiolation of mcm(5)S(2)U at tRNA wobble positions of cytosolic tRNA(Lys), tRNA(Glu) and tRNA(Gln). Also essential during biosynthesis of the molybdenum cofactor. Acts by mediating the C-terminal thiocarboxylation of sulfur carriers URM1 and MOCS2A. Its N-terminus first activates URM1 and MOCS2A as acyl-adenylates (-COAMP), then the persulfide sulfur on the catalytic cysteine is transferred to URM1 and MOCS2A to form thiocarboxylation (-COSH) of their C-terminus. The reaction probably involves hydrogen sulfide that is generated from the persulfide intermediate and that acts as a nucleophile towards URM1 and MOCS2A. Subsequently, a transient disulfide bond is formed. Does not use thiosulfate as sulfur donor; NFS1 probably acting as a sulfur donor for thiocarboxylation reactions. The polypeptide is Adenylyltransferase and sulfurtransferase MOCS3 (Caenorhabditis briggsae).